The primary structure comprises 44 residues: Photosystem I reaction center subunit IX (44 aa).

Residues 9–29 (FVRSAPVVAAIWLSLTAGIII) form a helical membrane-spanning segment.

Belongs to the PsaJ family.

The protein localises to the cellular thylakoid membrane. In terms of biological role, may help in the organization of the PsaE and PsaF subunits. The sequence is that of Photosystem I reaction center subunit IX from Prochlorococcus marinus (strain MIT 9301).